The following is a 1096-amino-acid chain: Pullulanase (1096 aa).

Residues M1–G19 form the signal peptide. C20 is lipidated: N-palmitoyl cysteine. C20 is lipidated: S-diacylglycerol cysteine. Positions S24–S34 are enriched in low complexity. The interval S24–Q50 is disordered. The active-site Nucleophile is D694. E723 acts as the Proton donor in catalysis. Residues Q1014–R1044 form a disordered region.

It belongs to the glycosyl hydrolase 13 family. As to quaternary structure, homotrimer.

Its subcellular location is the cell membrane. The enzyme catalyses Hydrolysis of (1-&gt;6)-alpha-D-glucosidic linkages in pullulan, amylopectin and glycogen, and in the alpha- and beta-limit dextrins of amylopectin and glycogen.. The polypeptide is Pullulanase (pulA) (Klebsiella aerogenes (Enterobacter aerogenes)).